Consider the following 420-residue polypeptide: 3-phosphoshikimate 1-carboxyvinyltransferase (420 aa).

3 residues coordinate 3-phosphoshikimate: K20, S21, and R25. K20 is a phosphoenolpyruvate binding site. Phosphoenolpyruvate contacts are provided by G90 and R118. Residues S159, S160, Q161, S187, D303, and K330 each coordinate 3-phosphoshikimate. A phosphoenolpyruvate-binding site is contributed by Q161. The active-site Proton acceptor is D303. Residues R334, R376, and K402 each contribute to the phosphoenolpyruvate site.

This sequence belongs to the EPSP synthase family. As to quaternary structure, monomer.

The protein resides in the cytoplasm. It carries out the reaction 3-phosphoshikimate + phosphoenolpyruvate = 5-O-(1-carboxyvinyl)-3-phosphoshikimate + phosphate. The protein operates within metabolic intermediate biosynthesis; chorismate biosynthesis; chorismate from D-erythrose 4-phosphate and phosphoenolpyruvate: step 6/7. In terms of biological role, catalyzes the transfer of the enolpyruvyl moiety of phosphoenolpyruvate (PEP) to the 5-hydroxyl of shikimate-3-phosphate (S3P) to produce enolpyruvyl shikimate-3-phosphate and inorganic phosphate. The sequence is that of 3-phosphoshikimate 1-carboxyvinyltransferase from Brachyspira hyodysenteriae (strain ATCC 49526 / WA1).